Consider the following 614-residue polypeptide: Ankyrin repeat domain-containing protein 55 (614 aa).

The segment at 1–20 (MMRQATMDFSTPSVFDQQRG) is disordered. Over residues 7–16 (MDFSTPSVFD) the composition is skewed to polar residues. ANK repeat units lie at residues 26-55 (VDLT…SILE), 60-89 (EGCT…NINM), 93-125 (YGRT…IPDK), 126-157 (NGRL…EINH), 161-190 (EGMT…DPTL), 194-223 (DFKT…GPSI), 230-260 (SGKT…NLQA), 264-293 (DDRT…DSNL), and 297-326 (NEST…TEPT). 4 disordered regions span residues 319 to 339 (QESR…PQKK), 354 to 375 (KKEE…EEDT), 454 to 476 (TSHA…SRSE), and 564 to 614 (RNNL…SDEN). A compositionally biased stretch (basic and acidic residues) spans 354 to 373 (KKEEQRAHQKDPSRDRYREE). A Phosphoserine modification is found at S475.

This chain is Ankyrin repeat domain-containing protein 55 (ANKRD55), found in Homo sapiens (Human).